The sequence spans 229 residues: Putative N-acetylmannosamine-6-phosphate 2-epimerase (229 aa).

It belongs to the NanE family.

It catalyses the reaction an N-acyl-D-glucosamine 6-phosphate = an N-acyl-D-mannosamine 6-phosphate. It participates in amino-sugar metabolism; N-acetylneuraminate degradation; D-fructose 6-phosphate from N-acetylneuraminate: step 3/5. Functionally, converts N-acetylmannosamine-6-phosphate (ManNAc-6-P) to N-acetylglucosamine-6-phosphate (GlcNAc-6-P). In Escherichia coli O8 (strain IAI1), this protein is Putative N-acetylmannosamine-6-phosphate 2-epimerase.